The primary structure comprises 1579 residues: MEAKERKETVRFDAIRLSLASPEIIRSWSHGEVKKPETLNYRTLKPEKDGLFDARIFGPIKDYECLCGKYKKRKYEGTICDRCGVEVTRSDVRRERFGHIELASPVVHIWYLKSTPSKIGSLLDLTSRDIERVVYFESYLVIEHPTEEEEEAFEKDPKSLPLMEGGLTKYVKLHVVSEDEFREREYEYSNAEKYEYGMGAEKVKDVLARIDLEILAKRLKKDLHGYAGTFDDLNLSYKMNYPRLYNKAIIEIARKFSEVGLRFGDIEPTEKEIDVIISQGYYIVIDPASSDLKFGQIINPENVDSLPEGVIALTGVEALEKLYKAYREKVKEIPIFEVIKESVRNVILKEGTDARLKKIIRRLRLVEGFIESENKPEWMILEVLPVIPPDLRPLIALDGGRFASSDLNDLYRRVINRNNRLKRLIDLDAPEIIIRNEKRMLQEAVDALIDNGRRGRMVTQNNRPLKSLSDSLRGKEGRFRQNLLGKRVDYSGRSVIVVGPELQMHECGLPKQMALELFKPFIYRRLEEKGYATSIKSAKKLVEEKVPEVYECLEEVVKQHPVLLNRAPTLHRMSVQAFEPKLVEGKAIKLHPLVCPPFNADFDGDQMAVHVPLSVEAQLESYILMLSTQNILSPAHGKPVTMPSQDIILGVHYMTQELPNAKGEGKIFGSPEEAVTAYELGTIDLLAKIKVRINGKIVETTAGRIIFNQILPEGYKFVNEVLDKKKISKLISDIYEKYGNEIAAQTLDKIKEIGFRFATKAAVSISVADLVVPKKKAKILEKAIKEAETVWKQYVDGIITKGERHNKIIDIWSQATNEVAKEMFNEIEKSERVENGKKYPGYFNPVYMMASSGARGSRDQIRQLAGMRGLMAKHSGEFIETPIMSNFREGLSVVEYFISTYGARKGLADTALKTAVAGYLTRRLADVAQDVIITGEDCGTLKGITVSSIIESGEIVVPFKDRIIGRYTAEDVYDPYTGELLISANEEITEEVVDKFEKAGIEKVKIRSVLTCEMPHGVCAKCYGRDLAQRKLVDIGEAVGIIAAQSIGEPGTQLTMRTFHIGGAATAKEVQTQHKATHDGTVKLQNVKFVVDKKGRKLIINREGSIKILDKEGKTIERFPAPYGAVLYVEDGQEVKEGTILAEWEPFSDPIIAEKGGEVELRDVILDVTLKEERDNITGKTIYTITFLRPKDAQLHTPRLVIKGEDGNEYVYDLPVNTILLIPKENLEEVWDKCFACSEAEKTDIHHKYLQVKKGFKVSEGDVVAKIPKEKAKVRDIVGGLPRVEELLEAREPKNKAIITEIDGIVKIYEDAKEITLINPKEGKTETYKVPDTTFVIVKNGSFVKAGQSLVDDGSIVAEFDGMVRLKSEGSRIVVFNKETGQQKDYKVPKGKFIIVKDNSVVKAGDPLTDGTPNPHDILRVMGIEELAAFLVKEAQIVYRLQGVEINDKHFEVIIRQILRKVKIVDPGDSRFLLNEIVDKLDLEEEINKVISEGGRPPKAEPVLVGITKAALTTRSWISAASFQETTRVLADAAVEGKVDPLKGLKENVIIGGIIPAGTGIKEYSEVEVVLKEEEKEEV.

Residues cysteine 65, cysteine 67, cysteine 80, and cysteine 83 each coordinate Zn(2+). Mg(2+) is bound by residues aspartate 601, aspartate 603, and aspartate 605. Residues cysteine 938, cysteine 1012, cysteine 1019, and cysteine 1022 each coordinate Zn(2+).

Belongs to the RNA polymerase beta' chain family. The RNAP catalytic core consists of 2 alpha, 1 beta, 1 beta' and 1 omega subunit. When a sigma factor is associated with the core the holoenzyme is formed, which can initiate transcription. Mg(2+) serves as cofactor. The cofactor is Zn(2+).

It carries out the reaction RNA(n) + a ribonucleoside 5'-triphosphate = RNA(n+1) + diphosphate. In terms of biological role, DNA-dependent RNA polymerase catalyzes the transcription of DNA into RNA using the four ribonucleoside triphosphates as substrates. In Sulfurihydrogenibium sp. (strain YO3AOP1), this protein is DNA-directed RNA polymerase subunit beta'.